The chain runs to 420 residues: L-cysteine:1D-myo-inositol 2-amino-2-deoxy-alpha-D-glucopyranoside ligase (420 aa).

Cys-48 is a Zn(2+) binding site. Residues 48 to 51, Thr-63, and 86 to 88 contribute to the L-cysteinyl-5'-AMP site; these read CGIT and NIT. The 'HIGH' region motif lies at 50–60; sequence ITPYDSTHLGH. The 'ERGGDP' region signature appears at 192–197; the sequence is ERGGDP. Trp-232 serves as a coordination point for L-cysteinyl-5'-AMP. Cys-236 lines the Zn(2+) pocket. 254–256 contacts L-cysteinyl-5'-AMP; it reads GSD. His-261 is a Zn(2+) binding site. Ile-288 serves as a coordination point for L-cysteinyl-5'-AMP. Residues 294-298 carry the 'KMSKS' region motif; sequence KMSKS.

The protein belongs to the class-I aminoacyl-tRNA synthetase family. MshC subfamily. In terms of assembly, monomer. Requires Zn(2+) as cofactor.

The enzyme catalyses 1D-myo-inositol 2-amino-2-deoxy-alpha-D-glucopyranoside + L-cysteine + ATP = 1D-myo-inositol 2-(L-cysteinylamino)-2-deoxy-alpha-D-glucopyranoside + AMP + diphosphate + H(+). Catalyzes the ATP-dependent condensation of GlcN-Ins and L-cysteine to form L-Cys-GlcN-Ins. The polypeptide is L-cysteine:1D-myo-inositol 2-amino-2-deoxy-alpha-D-glucopyranoside ligase (Corynebacterium glutamicum (strain R)).